A 464-amino-acid chain; its full sequence is Delta(5) fatty acid desaturase A (464 aa).

The region spanning 13-90 is the Cytochrome b5 heme-binding domain; sequence GKQYSWSELA…LKNYEIGYIS (78 aa). The heme site is built by His-48 and His-71. 2 helical membrane-spanning segments follow: residues 125–145 and 153–173; these read AVSIFSRLALVYLLVFVTYYL and FYLNCFLAIVYALCNSLFSMH. The Histidine box-1 motif lies at 176–180; that stretch reads HDSCH. The Histidine box-2 motif lies at 212–217; sequence HVIGHH. Residues 318–338 traverse the membrane as a helical segment; that stretch reads FTDLICYFLIAEFVFGWYLTI. The short motif at 396-400 is the Histidine box-3 element; that stretch reads QVVHH.

It belongs to the fatty acid desaturase type 1 family. The cofactor is Fe cation.

It is found in the membrane. Functionally, specific for desaturation of the 5 position in C16 and C18 fatty acids. In Dictyostelium discoideum (Social amoeba), this protein is Delta(5) fatty acid desaturase A (fadA).